Consider the following 119-residue polypeptide: EF-hand calcium-binding domain-containing protein 2 (119 aa).

Positions 1-22 (MKVAVVLIVVLVVMMIGQETDS) are cleaved as a signal peptide. The EF-hand domain occupies 82-117 (VDDNGFVEFKATYDVDGDGVVQVEEYETVVELTENL). Ca(2+) contacts are provided by Asp-95, Asp-97, Asp-99, and Glu-106.

As to expression, component of the acid-soluble organic matrix of calcified layers of the shell (at protein level).

It localises to the secreted. This chain is EF-hand calcium-binding domain-containing protein 2, found in Lottia gigantea (Giant owl limpet).